Reading from the N-terminus, the 61-residue chain is Large ribosomal subunit protein uL30 (61 aa).

Belongs to the universal ribosomal protein uL30 family. As to quaternary structure, part of the 50S ribosomal subunit.

The sequence is that of Large ribosomal subunit protein uL30 from Corynebacterium glutamicum (strain R).